The sequence spans 349 residues: Draxin (349 aa).

The N-terminal stretch at 1–25 (MAASSTFFSPSLFLCVLVLIDITLA) is a signal peptide. The segment covering 40–53 (NHLQNQETWPQQPR) has biased composition (polar residues). Disordered stretches follow at residues 40–63 (NHLQ…HGLA), 119–166 (PHAE…LYKK), and 246–273 (WPSA…EGEP). The span at 54-63 (SGHHHKHGLA) shows a compositional bias: basic residues. The span at 119-139 (PHAERENQSPGSERGKKQNRE) shows a compositional bias: basic and acidic residues. Composition is skewed to basic residues over residues 140-155 (QRRH…HRGK) and 249-258 (AKKKEKRRSK). N-linked (GlcNAc...) asparagine glycosylation occurs at Asn-264.

The protein belongs to the draxin family.

It is found in the secreted. Chemorepulsive axon guidance protein required for the development of spinal cord and forebrain commissures. Acts as a chemorepulsive guidance protein for commissural axons during development. Able to inhibit or repel neurite outgrowth from dorsal spinal cord and cortical explants in vitro. Binds directly to the neurites and growth cones. This chain is Draxin, found in Gallus gallus (Chicken).